The sequence spans 879 residues: Band 4.1-like protein 1 (879 aa).

The segment at 1–88 (MTTETGPDSE…TPSKAQKSPQ (88 aa)) is disordered. Over residues 17-35 (ETPQQPEAAAAVTTPVTPA) the composition is skewed to low complexity. Threonine 30 carries the phosphothreonine modification. The span at 38-50 (SHPETNSNEKHLT) shows a compositional bias: basic and acidic residues. At serine 75 the chain carries Phosphoserine. Residues 76-87 (ERTTPSKAQKSP) are compositionally biased toward polar residues. Threonine 79 carries the phosphothreonine modification. The 282-residue stretch at 97–378 (AICRVTLLDA…EHHTFFRLVS (282 aa)) folds into the FERM domain. Tyrosine 343 carries the phosphotyrosine modification. A phosphoserine mark is found at serine 378, serine 430, serine 437, serine 461, and serine 466. A hydrophilic region spans residues 381-482 (PPPKGFLVMG…VRTPTKIKEL (102 aa)). Residues 428-501 (SRSLDGAEFS…HKQEFLDKPE (74 aa)) form a disordered region. The span at 444–501 (ENHDAGPEGDKREDDAESGGRRSEAEEGEVRTPTKIKELKPEQETTPRHKQEFLDKPE) shows a compositional bias: basic and acidic residues. The residue at position 475 (threonine 475) is a Phosphothreonine. The spectrin--actin-binding stretch occupies residues 483–541 (KPEQETTPRHKQEFLDKPEDVLLKHQASINELKRTLKEPNSKLIHRDRDWDRERRLPSS). Serine 510 is modified (phosphoserine). Residues 514-538 (LKRTLKEPNSKLIHRDRDWDRERRL) show a composition bias toward basic and acidic residues. The disordered stretch occupies residues 514–594 (LKRTLKEPNS…QDQERDAVFL (81 aa)). Phosphoserine occurs at positions 540, 541, 544, and 546. The residue at position 550 (threonine 550) is a Phosphothreonine. The span at 550 to 577 (TPEKASERAGLREGSEEKVKPPRPRAPE) shows a compositional bias: basic and acidic residues. Serine 564, serine 578, serine 639, serine 648, serine 650, serine 665, serine 666, serine 671, serine 677, and serine 684 each carry phosphoserine. The interval 657–696 (FAQDLKGPSSQEDESGGLEDSPDRGACSTPEMPQFESVKA) is disordered. Phosphothreonine is present on threonine 685. Phosphoserine occurs at positions 721, 782, and 868. Residues 743-879 (PCITTETIST…EERDKKPQES (137 aa)) are C-terminal (CTD).

As to quaternary structure, interacts with AGAP2. In terms of tissue distribution, highest expression in brain, also present in kidney, olfactory epithelium, retina, sensory ganglia, gastrointestinal tract (only enteric neurons) and lung.

Its subcellular location is the cytoplasm. It is found in the cytoskeleton. May function to confer stability and plasticity to neuronal membrane via multiple interactions, including the spectrin-actin-based cytoskeleton, integral membrane channels and membrane-associated guanylate kinases. This chain is Band 4.1-like protein 1, found in Mus musculus (Mouse).